The sequence spans 968 residues: MSSTTTVAEFAAELNKPTATLIEQLTSAGVAKVQASDHLSEVDKQKLLGYLQASHGTVTAERKKITLVKKSTTEIKQADATGKARTIQVEVRKKRTFVKREDGSDLPAEEVQPEVVAAPQVPVIDDAELIRREEEASRHAELLRRQEAELAEKRRLREELDAKEAARELERQAAAESAKAAAEAAEAAKKAKPVTGKAKEVAQPAGAEASRAAAETAVAEEAAATKAADAAVVQAAAKAKATAEFQADAAKAQDLQERRRKAEAEAAGIRAMMSAPKRVLVPHVDPKAAIKGTLHKPAVAPGAAKPAAAAGAPGAPGAAGKKEVKSENLSSTWKDDAAKKKGIPSRGATAVPGRGNFRSGPRGRRSNDRDARPESTFVAPTEFKVIEVHVPETITVAELAHKMSVKSSEVIKHLMKLGQMVTINQPLDQDTAMIVVEEMGHKAITAALDDPEAFTDDDVQGQQAEALPRAPVVTVMGHVDHGKTSLLDYIRRAKVAAGEAGGITQHIGAYHVETPRGMISFLDTPGHEAFTAMRARGAQATDIVILVVAADDGVMPQTKEAIKHAKAAGVPIVVAINKIDKADANMDRVKGELVTEEVIPEEFGGESPFVGVSARTGEGVDTLLEQVLLQAEVLELRAPVEALAKGLVIEAQLDKGRGPVATVLIQSGTLKTGDVVLAGSTYGRVRAMLDENGKPIKTAGPSIPVEIQGLTEVPQAGDEFMVMTDERRAREIATYRAGKFRNTKLAKQQASKLENMFSDISAGEVKMLPIIIKADVQGSQEALAQSLLKLSTDEVKVQLVYSGVGGISESDVNLAIASKAVLIGFNTRADAQARKQAENNGIDIRYYNIIYDAVDELKAAMSGMLTPDKKEEVIGTAEIRQVFKVSKIGSIAGCMVTAGIVRRTARLRLLRDNVVIFTGELDSLKRFKDDVKEVKESFECGLNIKNYNDIQEGDILEFFEIKEVARTL.

The span at 305–319 shows a compositional bias: low complexity; sequence KPAAAAGAPGAPGAA. The segment at 305–376 is disordered; that stretch reads KPAAAAGAPG…NDRDARPEST (72 aa). The 168-residue stretch at 468–635 folds into the tr-type G domain; it reads PRAPVVTVMG…QVLLQAEVLE (168 aa). The tract at residues 477–484 is G1; sequence GHVDHGKT. 477-484 provides a ligand contact to GTP; sequence GHVDHGKT. Residues 502–506 form a G2 region; it reads GITQH. A G3 region spans residues 523–526; it reads DTPG. Residues 523–527 and 577–580 each bind GTP; these read DTPGH and NKID. Residues 577–580 form a G4 region; sequence NKID. Residues 613-615 form a G5 region; it reads SAR.

It belongs to the TRAFAC class translation factor GTPase superfamily. Classic translation factor GTPase family. IF-2 subfamily.

It localises to the cytoplasm. Functionally, one of the essential components for the initiation of protein synthesis. Protects formylmethionyl-tRNA from spontaneous hydrolysis and promotes its binding to the 30S ribosomal subunits. Also involved in the hydrolysis of GTP during the formation of the 70S ribosomal complex. The chain is Translation initiation factor IF-2 from Polaromonas sp. (strain JS666 / ATCC BAA-500).